Here is a 261-residue protein sequence, read N- to C-terminus: Hemin import ATP-binding protein HmuV (261 aa).

An ABC transporter domain is found at 2–243; the sequence is LCANNVSAQI…ALLKRVYNIN (242 aa). 34-41 is an ATP binding site; the sequence is GPNGAGKS.

It belongs to the ABC transporter superfamily. Heme (hemin) importer (TC 3.A.1.14.5) family. In terms of assembly, the complex is composed of two ATP-binding proteins (HmuV), two transmembrane proteins (HmuU) and a solute-binding protein (HmuT).

It is found in the cell inner membrane. In terms of biological role, part of the ABC transporter complex HmuTUV involved in hemin import. Responsible for energy coupling to the transport system. This is Hemin import ATP-binding protein HmuV from Pseudoalteromonas translucida (strain TAC 125).